The chain runs to 216 residues: Uracil phosphoribosyltransferase (216 aa).

5-phospho-alpha-D-ribose 1-diphosphate contacts are provided by residues R85, R110, and 135–143 (DPMVATGYS). Residues I200 and 205–207 (GDA) each bind uracil. Residue D206 coordinates 5-phospho-alpha-D-ribose 1-diphosphate.

It belongs to the UPRTase family. Requires Mg(2+) as cofactor.

The enzyme catalyses UMP + diphosphate = 5-phospho-alpha-D-ribose 1-diphosphate + uracil. It functions in the pathway pyrimidine metabolism; UMP biosynthesis via salvage pathway; UMP from uracil: step 1/1. With respect to regulation, allosterically activated by GTP. Functionally, catalyzes the conversion of uracil and 5-phospho-alpha-D-ribose 1-diphosphate (PRPP) to UMP and diphosphate. The sequence is that of Uracil phosphoribosyltransferase from Burkholderia mallei (strain NCTC 10247).